Here is a 417-residue protein sequence, read N- to C-terminus: Gamma-glutamyl phosphate reductase (417 aa).

The protein belongs to the gamma-glutamyl phosphate reductase family.

Its subcellular location is the cytoplasm. It carries out the reaction L-glutamate 5-semialdehyde + phosphate + NADP(+) = L-glutamyl 5-phosphate + NADPH + H(+). It functions in the pathway amino-acid biosynthesis; L-proline biosynthesis; L-glutamate 5-semialdehyde from L-glutamate: step 2/2. Functionally, catalyzes the NADPH-dependent reduction of L-glutamate 5-phosphate into L-glutamate 5-semialdehyde and phosphate. The product spontaneously undergoes cyclization to form 1-pyrroline-5-carboxylate. The chain is Gamma-glutamyl phosphate reductase from Pectobacterium carotovorum subsp. carotovorum (strain PC1).